The chain runs to 484 residues: UDP-N-acetylmuramate--L-alanine ligase (484 aa).

Residue 127–133 (GTHGKTT) participates in ATP binding.

Belongs to the MurCDEF family.

It is found in the cytoplasm. It catalyses the reaction UDP-N-acetyl-alpha-D-muramate + L-alanine + ATP = UDP-N-acetyl-alpha-D-muramoyl-L-alanine + ADP + phosphate + H(+). Its pathway is cell wall biogenesis; peptidoglycan biosynthesis. In terms of biological role, cell wall formation. In Shewanella amazonensis (strain ATCC BAA-1098 / SB2B), this protein is UDP-N-acetylmuramate--L-alanine ligase.